Reading from the N-terminus, the 230-residue chain is RNA-binding riboflavin kinase RibR (230 aa).

The protein belongs to the RibR family.

It catalyses the reaction riboflavin + ATP = FMN + ADP + H(+). Its function is as follows. May be directly involved in the regulation of the rib genes. C-terminal part of RibR specifically binds to RFN of the rib leader of the riboflavin biosynthetic operon. The RFN element is a sequence within the rib-leader mRNA reported to serve as a receptor for an FMN-dependent riboswitch. Possibly, RibR produces the comodulator FMN through its own N-terminal flavokinase activity. FMN-activated RibR may stabilize the anti-anti terminator structure of RFN mRNA, causing transcription termination of the rib genes in trans. The polypeptide is RNA-binding riboflavin kinase RibR (ribR) (Bacillus subtilis (strain 168)).